A 108-amino-acid polypeptide reads, in one-letter code: Protein YcgL (108 aa).

The 85-residue stretch at 12–96 (MFCVIYRSSK…PPEDLLKQHL (85 aa)) folds into the YcgL domain.

The sequence is that of Protein YcgL from Shigella sonnei (strain Ss046).